Consider the following 444-residue polypeptide: Glutamate--tRNA ligase 2 (444 aa).

The 'HIGH' region signature appears at 7 to 17 (PSPTGYLHVGN). The 'KMSKS' region signature appears at 240 to 244 (KLSKR). Residue K243 coordinates ATP.

This sequence belongs to the class-I aminoacyl-tRNA synthetase family. Glutamate--tRNA ligase type 1 subfamily. In terms of assembly, monomer.

It localises to the cytoplasm. The catalysed reaction is tRNA(Glu) + L-glutamate + ATP = L-glutamyl-tRNA(Glu) + AMP + diphosphate. Catalyzes the attachment of glutamate to tRNA(Glu) in a two-step reaction: glutamate is first activated by ATP to form Glu-AMP and then transferred to the acceptor end of tRNA(Glu). In Gluconobacter oxydans (strain 621H) (Gluconobacter suboxydans), this protein is Glutamate--tRNA ligase 2.